The chain runs to 116 residues: Large ribosomal subunit protein bL19 (116 aa).

This sequence belongs to the bacterial ribosomal protein bL19 family.

In terms of biological role, this protein is located at the 30S-50S ribosomal subunit interface and may play a role in the structure and function of the aminoacyl-tRNA binding site. This chain is Large ribosomal subunit protein bL19, found in Nocardioides sp. (strain ATCC BAA-499 / JS614).